We begin with the raw amino-acid sequence, 93 residues long: M-zodatoxin-Lt5a (93 aa).

Residues 1–22 (MKYCVVILALLVALVCITESRS) form the signal peptide. A propeptide spanning residues 23–64 (TETGYAVAETLEDNDLDELQAYLEEIAEASEMEDFSNIEEAR) is cleaved from the precursor. A Processing quadruplet motif motif is present at residues 61-64 (EEAR). Residue Leu92 is modified to Leucine amide.

Cleavage of the propeptide depends on the processing quadruplet motif (XXXR, with at least one of X being E). In terms of tissue distribution, expressed by the venom gland.

The protein resides in the secreted. Has antimicrobial activity against. Gram-positive bacteria (A.globiformis VKM Ac-1112 (MIC=1.1 uM), and B.subtilis VKM B-501 (MIC=0.6 uM)), Gram-negative bacteria (E.coli DH5-alpha (MIC=0.6 uM), E.coli MH1 (MIC=0.6 uM), and P.aeruginosa PAO1 (MIC=18 uM)), and yeasts (P.pastoris GS115 (MIC&gt;37 uM), and S.cerevisiae Y190 (MIC&gt;37 uM)). Also has a moderate hemolytic activity against rabbit erythrocytes. Causes paralysis, but is not lethal when injected into insect (M.domestica) larvae. In Lachesana tarabaevi (Spider), this protein is M-zodatoxin-Lt5a.